Here is a 163-residue protein sequence, read N- to C-terminus: Endoribonuclease YbeY (163 aa).

Zn(2+) contacts are provided by His123, His127, and His133.

It belongs to the endoribonuclease YbeY family. It depends on Zn(2+) as a cofactor.

It is found in the cytoplasm. Functionally, single strand-specific metallo-endoribonuclease involved in late-stage 70S ribosome quality control and in maturation of the 3' terminus of the 16S rRNA. The protein is Endoribonuclease YbeY of Helicobacter hepaticus (strain ATCC 51449 / 3B1).